The chain runs to 346 residues: Holliday junction branch migration complex subunit RuvB (346 aa).

A large ATPase domain (RuvB-L) region spans residues 4–184 (TDRLIAPTAK…FGIVQRLEFY (181 aa)). ATP contacts are provided by residues Arg24, Gly65, Lys68, Thr69, Thr70, 131 to 133 (EDF), Arg174, Tyr184, and Arg221. Thr69 contacts Mg(2+). A small ATPAse domain (RuvB-S) region spans residues 185–255 (NVKDLTHIVA…LADKALNMLN (71 aa)). The tract at residues 258-346 (ERGFDHMDRR…QESQGGEGIA (89 aa)) is head domain (RuvB-H). The DNA site is built by Arg294, Arg313, and Arg318.

Belongs to the RuvB family. As to quaternary structure, homohexamer. Forms an RuvA(8)-RuvB(12)-Holliday junction (HJ) complex. HJ DNA is sandwiched between 2 RuvA tetramers; dsDNA enters through RuvA and exits via RuvB. An RuvB hexamer assembles on each DNA strand where it exits the tetramer. Each RuvB hexamer is contacted by two RuvA subunits (via domain III) on 2 adjacent RuvB subunits; this complex drives branch migration. In the full resolvosome a probable DNA-RuvA(4)-RuvB(12)-RuvC(2) complex forms which resolves the HJ.

The protein resides in the cytoplasm. The catalysed reaction is ATP + H2O = ADP + phosphate + H(+). In terms of biological role, the RuvA-RuvB-RuvC complex processes Holliday junction (HJ) DNA during genetic recombination and DNA repair, while the RuvA-RuvB complex plays an important role in the rescue of blocked DNA replication forks via replication fork reversal (RFR). RuvA specifically binds to HJ cruciform DNA, conferring on it an open structure. The RuvB hexamer acts as an ATP-dependent pump, pulling dsDNA into and through the RuvAB complex. RuvB forms 2 homohexamers on either side of HJ DNA bound by 1 or 2 RuvA tetramers; 4 subunits per hexamer contact DNA at a time. Coordinated motions by a converter formed by DNA-disengaged RuvB subunits stimulates ATP hydrolysis and nucleotide exchange. Immobilization of the converter enables RuvB to convert the ATP-contained energy into a lever motion, pulling 2 nucleotides of DNA out of the RuvA tetramer per ATP hydrolyzed, thus driving DNA branch migration. The RuvB motors rotate together with the DNA substrate, which together with the progressing nucleotide cycle form the mechanistic basis for DNA recombination by continuous HJ branch migration. Branch migration allows RuvC to scan DNA until it finds its consensus sequence, where it cleaves and resolves cruciform DNA. The protein is Holliday junction branch migration complex subunit RuvB of Cellvibrio japonicus (strain Ueda107) (Pseudomonas fluorescens subsp. cellulosa).